A 311-amino-acid polypeptide reads, in one-letter code: GTPase Era (311 aa).

An Era-type G domain is found at 18-185 (RSGFVALIGA…AKYLAESVPN (168 aa)). The segment at 26 to 33 (GAPNAGKS) is G1. Position 26 to 33 (26 to 33 (GAPNAGKS)) interacts with GTP. The segment at 52–56 (QTTRA) is G2. Residues 73-76 (DTPG) are G3. GTP-binding positions include 73–77 (DTPGI) and 135–138 (NKVD). The G4 stretch occupies residues 135–138 (NKVD). Residues 164–166 (ISA) are G5. In terms of domain architecture, KH type-2 spans 216–293 (LHEELPYAST…HQFLFVKVRE (78 aa)).

This sequence belongs to the TRAFAC class TrmE-Era-EngA-EngB-Septin-like GTPase superfamily. Era GTPase family. As to quaternary structure, monomer.

It is found in the cytoplasm. The protein resides in the cell inner membrane. An essential GTPase that binds both GDP and GTP, with rapid nucleotide exchange. Plays a role in 16S rRNA processing and 30S ribosomal subunit biogenesis and possibly also in cell cycle regulation and energy metabolism. The polypeptide is GTPase Era (Brucella melitensis biotype 1 (strain ATCC 23456 / CCUG 17765 / NCTC 10094 / 16M)).